The primary structure comprises 207 residues: MAEHDFETISSETLHTGAIFALRRDQVRMPGGGIVTREVVEHFGAVAIVAMDDNGNIPMVYQYRHTYGRRLWELPAGLLDVAGEPPHLTAARELREEVGLQASTWQVLVDLDTAPGFSDESVRVYLATGLREVGRPEAHHEEADMTMGWYPIAEAARRVLRGEIVNSIAIAGVLAVHAVTTGFAQPRPLDTEWIDRPTAFAARRAER.

Substrate is bound by residues 37–38 (RE) and R64. In terms of domain architecture, Nudix hydrolase spans 41–172 (EHFGAVAIVA…EIVNSIAIAG (132 aa)). A Mg(2+)-binding site is contributed by A76. Positions 77–99 (GLLDVAGEPPHLTAARELREEVG) match the Nudix box motif. L78 provides a ligand contact to substrate. Mg(2+) contacts are provided by E93 and E97. Residues 114–116 (APG) and E120 contribute to the substrate site. E142 contacts Mg(2+). The Proton acceptor role is filled by E142.

This sequence belongs to the Nudix hydrolase family. As to quaternary structure, homodimer. The cofactor is Mg(2+). Mn(2+) is required as a cofactor.

It catalyses the reaction ADP-D-ribose + H2O = D-ribose 5-phosphate + AMP + 2 H(+). It carries out the reaction 8-oxo-dGDP + H2O = 8-oxo-dGMP + phosphate + H(+). The catalysed reaction is 8-oxo-GDP + H2O = 8-oxo-GMP + phosphate + H(+). Functionally, catalyzes the hydrolysis of ADP-ribose (ADPR) to AMP and ribose-5-phosphate. Can also hydrolyze ADP-mannose and ADP-glucose, with lower efficiency. Has weaker activity with NAD, GDP-sugars and UDP-sugars. Also catalyzes the conversion of 8-oxo-dGDP to 8-oxo-dGMP, and 8-oxo-GDP to 8-oxo-GMP. Functions in concert with MutT1 to detoxify 8-oxo-dGTP to 8-oxo-dGMP and may play an important role in supporting cellular growth under oxidative stress. The catalytic efficiency is much higher for the hydrolysis of ADPR than 8-oxo-dGTP, suggesting a more relevant biological role in hydrolysis of ADPR. The chain is ADP-ribose pyrophosphatase from Mycobacterium tuberculosis (strain ATCC 25618 / H37Rv).